A 355-amino-acid chain; its full sequence is MEPHLLGLLLGLLLSGTRVLAGYPIWWSLALGQQYTSLASQPLLCGSIPGLVPKQLRFCRNYIEIMPSVAEGVKLGIQECQHQFRGRRWNCTTIDDSLAIFGPVLDKATRESAFVHAIASAGVAFAVTRSCAEGTSTICGCDSHHKGPPGEGWKWGGCSEDADFGVLVSREFADARENRPDARSAMNKHNNEAGRTTILDHMHLKCKCHGLSGSCEVKTCWWAQPDFRAIGDFLKDKYDSASEMVVEKHRESRGWVETLRAKYALFKPPTERDLVYYENSPNFCEPNPETGSFGTRDRTCNVTSHGIDGCDLLCCGRGHNTRTEKRKEKCHCVFHWCCYVSCQECIRIYDVHTCK.

An N-terminal signal peptide occupies residues 1–21; sequence MEPHLLGLLLGLLLSGTRVLA. 11 disulfides stabilise this stretch: Cys80–Cys91, Cys131–Cys139, Cys141–Cys158, Cys206–Cys220, Cys208–Cys215, Cys284–Cys315, Cys300–Cys310, Cys314–Cys354, Cys330–Cys345, Cys332–Cys342, and Cys337–Cys338. Asn90 is a glycosylation site (N-linked (GlcNAc...) asparagine). The O-palmitoleoyl serine; by PORCN moiety is linked to residue Ser212. Asn301 is a glycosylation site (N-linked (GlcNAc...) asparagine).

It belongs to the Wnt family. In terms of assembly, forms a soluble 1:1 complex with AFM; this prevents oligomerization and is required for prolonged biological activity. The complex with AFM may represent the physiological form in body fluids. Interacts with PORCN. Interacts with WLS. In terms of processing, palmitoleoylation is required for efficient binding to frizzled receptors. Depalmitoleoylation leads to Wnt signaling pathway inhibition. Detected at low levels in adult brain. Dorsal portion of the neural tube, dorsal ectoderm, the branchial arches, and the limb buds.

Its subcellular location is the secreted. The protein resides in the extracellular space. It localises to the extracellular matrix. In terms of biological role, ligand for members of the frizzled family of seven transmembrane receptors. Functions in the canonical Wnt signaling pathway that results in activation of transcription factors of the TCF/LEF family. Required for normal gastrulation, formation of the primitive streak, and for the formation of the mesoderm during early embryogenesis. Required for normal formation of the apical ectodermal ridge and for normal embryonic limb development. The protein is Proto-oncogene Wnt-3 (Wnt3) of Mus musculus (Mouse).